Consider the following 282-residue polypeptide: Bifunctional protein FolD (282 aa).

NADP(+) is bound by residues 165–167 and Ser190; that span reads GRS.

It belongs to the tetrahydrofolate dehydrogenase/cyclohydrolase family. In terms of assembly, homodimer.

The enzyme catalyses (6R)-5,10-methylene-5,6,7,8-tetrahydrofolate + NADP(+) = (6R)-5,10-methenyltetrahydrofolate + NADPH. It carries out the reaction (6R)-5,10-methenyltetrahydrofolate + H2O = (6R)-10-formyltetrahydrofolate + H(+). Its pathway is one-carbon metabolism; tetrahydrofolate interconversion. Catalyzes the oxidation of 5,10-methylenetetrahydrofolate to 5,10-methenyltetrahydrofolate and then the hydrolysis of 5,10-methenyltetrahydrofolate to 10-formyltetrahydrofolate. The protein is Bifunctional protein FolD of Acinetobacter baumannii (strain ATCC 17978 / DSM 105126 / CIP 53.77 / LMG 1025 / NCDC KC755 / 5377).